Consider the following 530-residue polypeptide: Phosphoenolpyruvate carboxykinase (ATP) (530 aa).

Substrate is bound by residues arginine 56, tyrosine 196, and lysine 202. ATP contacts are provided by residues lysine 202, histidine 221, and 237–245 (GLSGTGKTT). Lysine 202 and histidine 221 together coordinate Mn(2+). Position 258 (aspartate 258) interacts with Mn(2+). ATP contacts are provided by residues glutamate 286, arginine 322, 438 to 439 (RI), and threonine 444. Arginine 322 is a substrate binding site.

The protein belongs to the phosphoenolpyruvate carboxykinase (ATP) family. In terms of assembly, monomer. Mn(2+) is required as a cofactor.

It is found in the cytoplasm. The catalysed reaction is oxaloacetate + ATP = phosphoenolpyruvate + ADP + CO2. Its pathway is carbohydrate biosynthesis; gluconeogenesis. Involved in the gluconeogenesis. Catalyzes the conversion of oxaloacetate (OAA) to phosphoenolpyruvate (PEP) through direct phosphoryl transfer between the nucleoside triphosphate and OAA. The sequence is that of Phosphoenolpyruvate carboxykinase (ATP) from Photobacterium profundum (strain SS9).